We begin with the raw amino-acid sequence, 467 residues long: AT-rich interactive domain-containing protein cfi-1 (467 aa).

Residues 1–56 (MSVRIDEPQLFVSMSKEPTQETVNVGGHHDDSSSNCDERVDDQTEEQKSPPASPDL) are disordered. Residues 27-48 (GHHDDSSSNCDERVDDQTEEQK) are compositionally biased toward basic and acidic residues. The ARID domain maps to 181–273 (DVKRKEWLDD…YLYDYECEKE (93 aa)). Residues 356-464 (AILEAHQRNL…GVLFALDETV (109 aa)) enclose the REKLES domain. Positions 383–441 (LTACSNGNGGNIHNSGRESTSSNDSDIPAKRPKLENDVKTNGASSMRISTKHSDNSKTS) are disordered. Positions 409–420 (IPAKRPKLENDV) are enriched in basic and acidic residues. Over residues 421–430 (KTNGASSMRI) the composition is skewed to polar residues.

In terms of tissue distribution, present in IL2 and URA neurons, and in AVD and PVC interneurons. Present in muscles from head and pharynx (at protein level).

It is found in the nucleus. Functionally, transcription factor. Regulates neuronal subtype identity. Involved in motor neuron fate determination and maintenance, acting as a transcriptional repressor to counteract gene activation by transcription factor unc-3 in a subset of motor neurons. Probably acts by binding to specific promoter elements. Promotes differentiation of URA sensory neurons and prevents them from expressing male-specific CEM neuronal features. Promotes differentiation of AVD and PVC interneurons and their glutamate receptor expression. In Caenorhabditis elegans, this protein is AT-rich interactive domain-containing protein cfi-1 (cfi-1).